A 220-amino-acid chain; its full sequence is uncharacterized protein (220 aa).

The next 7 helical transmembrane spans lie at 25–45 (YFLL…SMSL), 50–70 (PGLI…YKLS), 74–94 (LGIL…GPIL), 105–125 (IVVL…AYVL), 135–155 (SGTI…SFFF), 158–178 (PMLY…GILY), and 196–216 (VSIF…FSIL).

This sequence belongs to the BI1 family.

It is found in the cell membrane. This is an uncharacterized protein from Pasteurella multocida (strain Pm70).